An 881-amino-acid chain; its full sequence is Low-affinity phosphate transporter PHO90 (881 aa).

The 288-residue stretch at 1 to 288 folds into the SPX domain; that stretch reads MRFSHFLKYN…HLNTRTELIE (288 aa). Helical transmembrane passes span 417-437, 456-476, 493-513, 514-534, 539-559, 581-601, 663-683, 691-711, 718-738, 758-778, 805-825, and 854-874; these read IYFI…NDAA, AIPL…FKVL, ILAA…TLGE, VLAQ…FAGC, VLLM…NVAA, AQAL…SSPI, FTVK…LWCV, FGSS…TGLL, AFPW…KAVS, GVFA…TFVS, ILVF…SSGF, and ASIL…ASVV.

Belongs to the CitM (TC 2.A.11) transporter family.

The protein localises to the membrane. Functionally, low-affinity phosphate transporter involved in the control of cellular phosphate levels. This chain is Low-affinity phosphate transporter PHO90 (PHO90), found in Saccharomyces cerevisiae (strain ATCC 204508 / S288c) (Baker's yeast).